A 264-amino-acid polypeptide reads, in one-letter code: Thymidylate synthase (264 aa).

R21 contacts dUMP. Residue H51 coordinates (6R)-5,10-methylene-5,6,7,8-tetrahydrofolate. Residue 126-127 participates in dUMP binding; sequence RR. C146 serves as the catalytic Nucleophile. Residues 166–169, N177, and 207–209 contribute to the dUMP site; these read RSCD and HLY. D169 is a (6R)-5,10-methylene-5,6,7,8-tetrahydrofolate binding site. A263 is a binding site for (6R)-5,10-methylene-5,6,7,8-tetrahydrofolate.

The protein belongs to the thymidylate synthase family. Bacterial-type ThyA subfamily. In terms of assembly, homodimer.

It localises to the cytoplasm. It catalyses the reaction dUMP + (6R)-5,10-methylene-5,6,7,8-tetrahydrofolate = 7,8-dihydrofolate + dTMP. The protein operates within pyrimidine metabolism; dTTP biosynthesis. Catalyzes the reductive methylation of 2'-deoxyuridine-5'-monophosphate (dUMP) to 2'-deoxythymidine-5'-monophosphate (dTMP) while utilizing 5,10-methylenetetrahydrofolate (mTHF) as the methyl donor and reductant in the reaction, yielding dihydrofolate (DHF) as a by-product. This enzymatic reaction provides an intracellular de novo source of dTMP, an essential precursor for DNA biosynthesis. In Shewanella baltica (strain OS223), this protein is Thymidylate synthase.